Here is a 310-residue protein sequence, read N- to C-terminus: Methionyl-tRNA formyltransferase (310 aa).

109–112 provides a ligand contact to (6S)-5,6,7,8-tetrahydrofolate; that stretch reads SLLP.

This sequence belongs to the Fmt family.

It catalyses the reaction L-methionyl-tRNA(fMet) + (6R)-10-formyltetrahydrofolate = N-formyl-L-methionyl-tRNA(fMet) + (6S)-5,6,7,8-tetrahydrofolate + H(+). Attaches a formyl group to the free amino group of methionyl-tRNA(fMet). The formyl group appears to play a dual role in the initiator identity of N-formylmethionyl-tRNA by promoting its recognition by IF2 and preventing the misappropriation of this tRNA by the elongation apparatus. This is Methionyl-tRNA formyltransferase from Agathobacter rectalis (strain ATCC 33656 / DSM 3377 / JCM 17463 / KCTC 5835 / VPI 0990) (Eubacterium rectale).